A 124-amino-acid polypeptide reads, in one-letter code: Large ribosomal subunit protein bL12 (124 aa).

This sequence belongs to the bacterial ribosomal protein bL12 family. Homodimer. Part of the ribosomal stalk of the 50S ribosomal subunit. Forms a multimeric L10(L12)X complex, where L10 forms an elongated spine to which 2 to 4 L12 dimers bind in a sequential fashion. Binds GTP-bound translation factors.

In terms of biological role, forms part of the ribosomal stalk which helps the ribosome interact with GTP-bound translation factors. Is thus essential for accurate translation. In Phocaeicola vulgatus (strain ATCC 8482 / DSM 1447 / JCM 5826 / CCUG 4940 / NBRC 14291 / NCTC 11154) (Bacteroides vulgatus), this protein is Large ribosomal subunit protein bL12.